The following is a 394-amino-acid chain: Phosphoglycerate kinase (394 aa).

Substrate contacts are provided by residues 21-23, Arg36, 59-62, Arg113, and Arg146; these read DLN and HLGR. ATP is bound by residues Lys197, Glu319, and 345–348; that span reads GGDT.

It belongs to the phosphoglycerate kinase family. In terms of assembly, monomer.

Its subcellular location is the cytoplasm. The enzyme catalyses (2R)-3-phosphoglycerate + ATP = (2R)-3-phospho-glyceroyl phosphate + ADP. The protein operates within carbohydrate degradation; glycolysis; pyruvate from D-glyceraldehyde 3-phosphate: step 2/5. This chain is Phosphoglycerate kinase, found in Halorhodospira halophila (strain DSM 244 / SL1) (Ectothiorhodospira halophila (strain DSM 244 / SL1)).